The primary structure comprises 246 residues: Ribonuclease PH (246 aa).

Residues Arg91 and 129-131 each bind phosphate; that span reads GTR.

The protein belongs to the RNase PH family. As to quaternary structure, homohexameric ring arranged as a trimer of dimers.

The catalysed reaction is tRNA(n+1) + phosphate = tRNA(n) + a ribonucleoside 5'-diphosphate. Its function is as follows. Phosphorolytic 3'-5' exoribonuclease that plays an important role in tRNA 3'-end maturation. Removes nucleotide residues following the 3'-CCA terminus of tRNAs; can also add nucleotides to the ends of RNA molecules by using nucleoside diphosphates as substrates, but this may not be physiologically important. Probably plays a role in initiation of 16S rRNA degradation (leading to ribosome degradation) during starvation. This chain is Ribonuclease PH, found in Burkholderia cenocepacia (strain ATCC BAA-245 / DSM 16553 / LMG 16656 / NCTC 13227 / J2315 / CF5610) (Burkholderia cepacia (strain J2315)).